A 372-amino-acid polypeptide reads, in one-letter code: Fatty acid 2-hydroxylase (372 aa).

The region spanning 8–86 (AASFTSAEVQ…LEQYYVGELR (79 aa)) is the Cytochrome b5 heme-binding domain. 2 residues coordinate heme: His-43 and His-69. The next 2 helical transmembrane spans lie at 168 to 188 (VWYS…WSYY) and 213 to 233 (SVFI…EYLI). Residues 219 to 361 (FVLGMLIWTL…TKLWDYFFHT (143 aa)) enclose the Fatty acid hydroxylase domain. Zn(2+) is bound by residues His-234, His-239, His-257, His-260, and His-261. The next 2 helical transmembrane spans lie at 268 to 288 (SRLV…YVFL) and 290 to 310 (LILP…GYVL). Zn(2+) is bound by residues His-315, His-319, His-336, His-339, and His-340.

The protein belongs to the sterol desaturase family. SCS7 subfamily. Zn(2+) serves as cofactor. As to expression, detected in oligodendrocytes (at protein level). Detected in sciatic nerve.

It localises to the endoplasmic reticulum membrane. The protein resides in the microsome membrane. The enzyme catalyses a 1,2-saturated fatty acid + 2 Fe(II)-[cytochrome b5] + O2 + 2 H(+) = a (R)-2-hydroxy fatty acid + 2 Fe(III)-[cytochrome b5] + H2O. It carries out the reaction hexadecanoate + 2 Fe(II)-[cytochrome b5] + O2 + 2 H(+) = (R)-2-hydroxyhexadecanoate + 2 Fe(III)-[cytochrome b5] + H2O. The catalysed reaction is octadecanoate + 2 Fe(II)-[cytochrome b5] + O2 + 2 H(+) = (R)-2-hydroxyoctadecanoate + 2 Fe(III)-[cytochrome b5] + H2O. It catalyses the reaction docosanoate + 2 Fe(II)-[cytochrome b5] + O2 + 2 H(+) = 2-hydroxydocosanoate + 2 Fe(III)-[cytochrome b5] + H2O. The enzyme catalyses tetracosanoate + 2 Fe(II)-[cytochrome b5] + O2 + 2 H(+) = (R)-2-hydroxytetracosanoate + 2 Fe(III)-[cytochrome b5] + H2O. Its pathway is lipid metabolism; fatty acid metabolism. It participates in sphingolipid metabolism; galactosylceramide biosynthesis. In terms of biological role, catalyzes the hydroxylation of free fatty acids at the C-2 position to produce 2-hydroxy fatty acids, which are building blocks of sphingolipids and glycosphingolipids common in neural tissue and epidermis. FA2H is stereospecific for the production of (R)-2-hydroxy fatty acids. Plays an essential role in the synthesis of galactosphingolipids of the myelin sheath. Responsible for the synthesis of sphingolipids and glycosphingolipids involved in the formation of epidermal lamellar bodies critical for skin permeability barrier. Participates in the synthesis of glycosphingolipids and a fraction of type II wax diesters in sebaceous gland, specifically regulating hair follicle homeostasis. Involved in the synthesis of sphingolipids of plasma membrane rafts, controlling lipid raft mobility and trafficking of raft-associated proteins. The sequence is that of Fatty acid 2-hydroxylase from Rattus norvegicus (Rat).